Reading from the N-terminus, the 485-residue chain is 4-alpha-glucanotransferase (485 aa).

It belongs to the disproportionating enzyme family.

The protein localises to the cytoplasm. The catalysed reaction is Transfers a segment of a (1-&gt;4)-alpha-D-glucan to a new position in an acceptor, which may be glucose or a (1-&gt;4)-alpha-D-glucan.. The protein is 4-alpha-glucanotransferase (malQ) of Aquifex aeolicus (strain VF5).